Reading from the N-terminus, the 592-residue chain is A-type ATP synthase subunit A (592 aa).

Position 234–241 (234–241 (GAFGTGKT)) interacts with ATP.

It belongs to the ATPase alpha/beta chains family. Has multiple subunits with at least A(3), B(3), C, D, E, F, H, I and proteolipid K(x).

It localises to the cell membrane. The enzyme catalyses ATP + H2O + 4 H(+)(in) = ADP + phosphate + 5 H(+)(out). In terms of biological role, component of the A-type ATP synthase that produces ATP from ADP in the presence of a proton gradient across the membrane. The A chain is the catalytic subunit. In Nitrosopumilus maritimus (strain SCM1), this protein is A-type ATP synthase subunit A.